We begin with the raw amino-acid sequence, 385 residues long: 4-hydroxy-3-methylbut-2-en-1-yl diphosphate synthase (flavodoxin) 2 (385 aa).

Residues Cys281, Cys284, Cys316, and Glu323 each coordinate [4Fe-4S] cluster.

It belongs to the IspG family. [4Fe-4S] cluster is required as a cofactor.

The catalysed reaction is (2E)-4-hydroxy-3-methylbut-2-enyl diphosphate + oxidized [flavodoxin] + H2O + 2 H(+) = 2-C-methyl-D-erythritol 2,4-cyclic diphosphate + reduced [flavodoxin]. Its pathway is isoprenoid biosynthesis; isopentenyl diphosphate biosynthesis via DXP pathway; isopentenyl diphosphate from 1-deoxy-D-xylulose 5-phosphate: step 5/6. Converts 2C-methyl-D-erythritol 2,4-cyclodiphosphate (ME-2,4cPP) into 1-hydroxy-2-methyl-2-(E)-butenyl 4-diphosphate. The sequence is that of 4-hydroxy-3-methylbut-2-en-1-yl diphosphate synthase (flavodoxin) 2 from Streptomyces avermitilis (strain ATCC 31267 / DSM 46492 / JCM 5070 / NBRC 14893 / NCIMB 12804 / NRRL 8165 / MA-4680).